Reading from the N-terminus, the 629-residue chain is Keratin, type II cytoskeletal 3 (629 aa).

Residues 1-182 (MNRQVCKTSG…DPQIGQVRAQ (182 aa)) form a head region. Phosphoserine occurs at positions 13 and 62. The coil 1A stretch occupies residues 183–218 (EREQIKTLNNKFASFIDKVRFLEQQNKVLETKWELL). Positions 183–498 (EREQIKTLNN…KLLEGEESRM (316 aa)) constitute an IF rod domain. A linker 1 region spans residues 219–239 (QRQGPNSVTGTNNLEPLFENR). The tract at residues 240–331 (INYLRSYLDS…TLYDAELSQM (92 aa)) is coil 1B. Residue K281 is modified to N6,N6-dimethyllysine. The tract at residues 332–355 (QSHVSDMSVVLSMDNNRSLDLDSI) is linker 12. Residue S349 is modified to Phosphoserine. Residues 356–494 (IAEVRAQYED…ATYRKLLEGE (139 aa)) form a coil 2 region. The tail stretch occupies residues 495–629 (ESRMSGECQS…FSQSSQRYSR (135 aa)). Residues 603 to 629 (SGGGFSSGSSSRGSSVKFSQSSQRYSR) form a disordered region. A compositionally biased stretch (polar residues) spans 618-629 (VKFSQSSQRYSR).

Belongs to the intermediate filament family. Heterotetramer of two type I and two type II keratins. Keratin-3 associates with keratin-12. Cornea specific. Expressed in the basal cells of corneal epithelium and stroma. Also expressed in esophageal epithelium.

The chain is Keratin, type II cytoskeletal 3 (KRT3) from Oryctolagus cuniculus (Rabbit).